The sequence spans 223 residues: Deoxyribose-phosphate aldolase (223 aa).

The active-site Proton donor/acceptor is D89. The active-site Schiff-base intermediate with acetaldehyde is K152. K181 serves as the catalytic Proton donor/acceptor.

Belongs to the DeoC/FbaB aldolase family. DeoC type 1 subfamily.

The protein localises to the cytoplasm. It catalyses the reaction 2-deoxy-D-ribose 5-phosphate = D-glyceraldehyde 3-phosphate + acetaldehyde. The protein operates within carbohydrate degradation; 2-deoxy-D-ribose 1-phosphate degradation; D-glyceraldehyde 3-phosphate and acetaldehyde from 2-deoxy-alpha-D-ribose 1-phosphate: step 2/2. Functionally, catalyzes a reversible aldol reaction between acetaldehyde and D-glyceraldehyde 3-phosphate to generate 2-deoxy-D-ribose 5-phosphate. This chain is Deoxyribose-phosphate aldolase, found in Bacillus subtilis (strain 168).